A 559-amino-acid polypeptide reads, in one-letter code: Tectonic-like complex member MKS1 (559 aa).

The 129-residue stretch at 311 to 439 (LRLFVNGEVV…TVSTWRPVEL (129 aa)) folds into the C2 B9-type domain.

As to quaternary structure, part of the tectonic-like complex (also named B9 complex). Interacts with TMEM107. Interacts with TCTN3, AHI1, TCTN1, TCTN2, CC2D2A. Interacts with FLNA. Interacts with TMEM67. Interacts with B9D1 and B9D2.

Its subcellular location is the cytoplasm. It localises to the cytoskeleton. It is found in the cilium basal body. The protein resides in the microtubule organizing center. The protein localises to the centrosome. Component of the tectonic-like complex, a complex localized at the transition zone of primary cilia and acting as a barrier that prevents diffusion of transmembrane proteins between the cilia and plasma membranes. Involved in centrosome migration to the apical cell surface during early ciliogenesis. Required for ciliary structure and function, including a role in regulating length and appropriate number through modulating centrosome duplication. Required for cell branching morphology. In Homo sapiens (Human), this protein is Tectonic-like complex member MKS1 (MKS1).